The chain runs to 753 residues: Neuroendocrine convertase 1 (753 aa).

The first 27 residues, 1-27 (MEQRGWTLQCTAFAFFCVWCALNSVKA), serve as a signal peptide directing secretion. Residues 28-110 (KRQFVNEWAA…QQYEKERSKR (83 aa)) constitute a propeptide that is removed on maturation. The 322-residue stretch at 129–450 (QWYLQDTRMT…FGLLNAKALV (322 aa)) folds into the Peptidase S8 domain. Catalysis depends on charge relay system residues aspartate 167 and histidine 208. Cystine bridges form between cysteine 225/cysteine 374 and cysteine 317/cysteine 347. The active-site Charge relay system is serine 382. Asparagine 401 is a glycosylation site (N-linked (GlcNAc...) asparagine). Residues 460-597 (NVPEKKECVV…KLILHGTSSQ (138 aa)) enclose the P/Homo B domain. The cysteines at positions 467 and 494 are disulfide-linked. The segment covering 633 to 651 (QKSLNGNLLVPKNSSSSNV) has biased composition (polar residues). The interval 633 to 663 (QKSLNGNLLVPKNSSSSNVEGRRDEQVQGTP) is disordered. Asparagine 645 carries an N-linked (GlcNAc...) asparagine glycan.

Belongs to the peptidase S8 family. Furin subfamily. Ca(2+) serves as cofactor.

It localises to the cytoplasmic vesicle. Its subcellular location is the secretory vesicle. It catalyses the reaction Release of protein hormones, neuropeptides and renin from their precursors, generally by hydrolysis of -Lys-Arg-|- bonds.. In terms of biological role, involved in the processing of hormone and other protein precursors at sites comprised of pairs of basic amino acid residues. Substrates include POMC, renin, enkephalin, dynorphin, somatostatin, insulin and AGRP. In Mus musculus (Mouse), this protein is Neuroendocrine convertase 1 (Pcsk1).